The sequence spans 424 residues: Dihydroorotase (424 aa).

2 residues coordinate Zn(2+): His60 and His62. Substrate contacts are provided by residues 62-64 (HFR) and Asn94. Residues Asp151, His178, and His231 each contribute to the Zn(2+) site. Asn277 lines the substrate pocket. Asp304 lines the Zn(2+) pocket. Asp304 is an active-site residue. His308 is a substrate binding site.

Belongs to the metallo-dependent hydrolases superfamily. DHOase family. Class I DHOase subfamily. Requires Zn(2+) as cofactor.

The catalysed reaction is (S)-dihydroorotate + H2O = N-carbamoyl-L-aspartate + H(+). It functions in the pathway pyrimidine metabolism; UMP biosynthesis via de novo pathway; (S)-dihydroorotate from bicarbonate: step 3/3. Functionally, catalyzes the reversible cyclization of carbamoyl aspartate to dihydroorotate. This Clostridium acetobutylicum (strain ATCC 824 / DSM 792 / JCM 1419 / IAM 19013 / LMG 5710 / NBRC 13948 / NRRL B-527 / VKM B-1787 / 2291 / W) protein is Dihydroorotase.